The primary structure comprises 394 residues: Glycerol-1-phosphate dehydrogenase [NAD(P)+] (394 aa).

NAD(+)-binding positions include aspartate 54, 116-120, and 138-141; these read GTIHD and TAPS. Aspartate 143 provides a ligand contact to substrate. Serine 147 lines the NAD(+) pocket. A substrate-binding site is contributed by aspartate 190. Residues aspartate 190 and histidine 270 each coordinate Ni(2+). A substrate-binding site is contributed by histidine 274. Histidine 290 provides a ligand contact to Ni(2+).

Belongs to the glycerol-1-phosphate dehydrogenase family. Homodimer. The cofactor is Ni(2+).

It is found in the cytoplasm. It carries out the reaction sn-glycerol 1-phosphate + NAD(+) = dihydroxyacetone phosphate + NADH + H(+). It catalyses the reaction sn-glycerol 1-phosphate + NADP(+) = dihydroxyacetone phosphate + NADPH + H(+). Its function is as follows. Catalyzes the NAD(P)H-dependent reduction of dihydroxyacetonephosphate (DHAP or glycerone phosphate) to glycerol 1-phosphate (G1P). The G1P thus generated is probably used for the synthesis of phosphoglycerolipids in Gram-positive bacterial species. This Bacillus velezensis (strain DSM 23117 / BGSC 10A6 / LMG 26770 / FZB42) (Bacillus amyloliquefaciens subsp. plantarum) protein is Glycerol-1-phosphate dehydrogenase [NAD(P)+].